We begin with the raw amino-acid sequence, 374 residues long: RNA ligase 1 (374 aa).

Tyr37, Arg54, and Lys75 together coordinate ATP. The N6-AMP-lysine intermediate role is filled by Lys99. ATP is bound by residues Glu159, Lys240, and Lys242. Asp272 contacts Mg(2+).

The protein belongs to the Tequatrovirus RNA ligase 1 family. The cofactor is Mg(2+).

It carries out the reaction ATP + (ribonucleotide)n-3'-hydroxyl + 5'-phospho-(ribonucleotide)m = (ribonucleotide)n+m + AMP + diphosphate.. In terms of biological role, involved in countering a host defense mechanism which, following viral infection, activates the host anticodon nuclease and shuts off viral translation. Repairs 5'-PO4 and 3'-OH groups in the cleaved host tRNA. The nick ligation reaction entails three nucleotidyl transfer steps. In the first step, the RNA ligase reacts with ATP in the absence of nucleic acid to form a covalent ligase-AMP intermediate and release pyrophosphate. In step 2, the ligase-AMP binds to the nicked duplex nucleic acid and transfers the adenylate to the 5'-PO4 terminus to form an adenylylated nicked intermediate. In step 3, the RNA ligase directs the attack of the nick 3'-OH on the 5'-phosphoanhydride linkage, resulting in a repaired 3'-5' phosphodiester and release of AMP. This is RNA ligase 1 (63) from Enterobacteria phage T4 (Bacteriophage T4).